A 150-amino-acid chain; its full sequence is Small ribosomal subunit protein uS13 (150 aa).

The protein belongs to the universal ribosomal protein uS13 family. In terms of assembly, part of the 30S ribosomal subunit. Forms a loose heterodimer with protein S19. Forms two bridges to the 50S subunit in the 70S ribosome.

In terms of biological role, located at the top of the head of the 30S subunit, it contacts several helices of the 16S rRNA. In the 70S ribosome it contacts the 23S rRNA (bridge B1a) and protein L5 of the 50S subunit (bridge B1b), connecting the 2 subunits; these bridges are implicated in subunit movement. The sequence is that of Small ribosomal subunit protein uS13 from Methanocorpusculum labreanum (strain ATCC 43576 / DSM 4855 / Z).